The sequence spans 185 residues: Ribosome-recycling factor (185 aa).

This sequence belongs to the RRF family.

It localises to the cytoplasm. Responsible for the release of ribosomes from messenger RNA at the termination of protein biosynthesis. May increase the efficiency of translation by recycling ribosomes from one round of translation to another. The polypeptide is Ribosome-recycling factor (Shewanella sp. (strain MR-4)).